We begin with the raw amino-acid sequence, 266 residues long: bZIP transcription factor 12 (266 aa).

Residues 184 to 248 enclose the bZIP domain; that stretch reads AMQRQKRMIK…KELKEMVVPV (65 aa). Positions 187–205 are basic motif; it reads RQKRMIKNRESAARSRERK. A coiled-coil region spans residues 202 to 244; sequence RERKQAYIAELESLVTQLEEENAKMFKEQEEQHQKRLKELKEM. A leucine-zipper region spans residues 212-219; that stretch reads LESLVTQL.

It localises to the nucleus. Its function is as follows. Transcription activator that binds to the ABA-responsive elements (ABREs) in vitro. Involved in abiotic stress responses and abscisic acid (ABA) signaling. Involved in the signaling pathway that induces growth inhibition in response to D-allose. This is bZIP transcription factor 12 from Oryza sativa subsp. japonica (Rice).